The primary structure comprises 64 residues: Alpha-conotoxin Lt14.1 (64 aa).

A signal peptide spans 1–20; the sequence is MKLSVMFIVFLMLTMPMTCA. The propeptide occupies 21-50; the sequence is GISRSATNGGEADVRAHDKAANLMALLQER. Disulfide bonds link Cys52–Cys60 and Cys56–Cys63. Cys63 carries the post-translational modification Cysteine amide.

It belongs to the conotoxin L superfamily. In terms of processing, may contain a 4-hydroxyproline. As to expression, expressed by the venom duct.

The protein localises to the secreted. Functionally, alpha-conotoxins act on postsynaptic membranes, they bind to the nicotinic acetylcholine receptors (nAChR) and thus inhibit them. This synthetic peptide displays analgesic activity in a hot plate assay. Analgesia is also observed against second phase pain in formalin-induced inflammatory pain model, and in a rat model of mechanically-induced pain. Effects downstream of nAChR are inhibition of calcium influx, inhibition of ERK1/2 phosphorylation and inhibition of c-fos/NOS expression. Genes associated with drug dependence are not up-regulated by this toxin. Treatment with this toxin reversed morphine withdrawal symptoms in mice. The polypeptide is Alpha-conotoxin Lt14.1 (Conus litteratus (Lettered cone)).